A 55-amino-acid polypeptide reads, in one-letter code: Protein SOX-19 (55 aa).

The HMG box DNA-binding region spans 1 to 55 (MVWSQIERRKIMEQWPDMHNAEISKRLGKRWKLLPDYEKIPFIKEAERLRLKHMA).

It is found in the nucleus. The protein is Protein SOX-19 (Sox19) of Mus musculus (Mouse).